The chain runs to 88 residues: Co-chaperonin GroES (88 aa).

Belongs to the GroES chaperonin family. Heptamer of 7 subunits arranged in a ring. Interacts with the chaperonin GroEL.

It localises to the cytoplasm. Together with the chaperonin GroEL, plays an essential role in assisting protein folding. The GroEL-GroES system forms a nano-cage that allows encapsulation of the non-native substrate proteins and provides a physical environment optimized to promote and accelerate protein folding. GroES binds to the apical surface of the GroEL ring, thereby capping the opening of the GroEL channel. This chain is Co-chaperonin GroES, found in Thermodesulfovibrio yellowstonii (strain ATCC 51303 / DSM 11347 / YP87).